A 69-amino-acid chain; its full sequence is Cytochrome c oxidase subunit 8A, mitochondrial (69 aa).

A mitochondrion-targeting transit peptide spans 1–25; that stretch reads MSVLTPLLLRGLTGSARRLPVPRAK. An SIFI-degron motif is present at residues 2 to 19; sequence SVLTPLLLRGLTGSARRL. Residues 26 to 36 lie on the Mitochondrial matrix side of the membrane; sequence IHSLPPEEKLG. A helical transmembrane segment spans residues 37–60; it reads IMELAVGLTSCFVTFLLPAGWILS. The Mitochondrial intermembrane portion of the chain corresponds to 61–69; that stretch reads HLETYRRPE.

Belongs to the cytochrome c oxidase VIII family. Component of the cytochrome c oxidase (complex IV, CIV), a multisubunit enzyme composed of 14 subunits. The complex is composed of a catalytic core of 3 subunits MT-CO1, MT-CO2 and MT-CO3, encoded in the mitochondrial DNA, and 11 supernumerary subunits COX4I, COX5A, COX5B, COX6A, COX6B, COX6C, COX7A, COX7B, COX7C, COX8 and NDUFA4, which are encoded in the nuclear genome. The complex exists as a monomer or a dimer and forms supercomplexes (SCs) in the inner mitochondrial membrane with NADH-ubiquinone oxidoreductase (complex I, CI) and ubiquinol-cytochrome c oxidoreductase (cytochrome b-c1 complex, complex III, CIII), resulting in different assemblies (supercomplex SCI(1)III(2)IV(1) and megacomplex MCI(2)III(2)IV(2)). In response to mitochondrial stress, the precursor protein is ubiquitinated by the SIFI complex in the cytoplasm before mitochondrial import, leading to its degradation. Within the SIFI complex, UBR4 initiates ubiquitin chain that are further elongated or branched by KCMF1.

The protein localises to the mitochondrion inner membrane. It participates in energy metabolism; oxidative phosphorylation. Its function is as follows. Component of the cytochrome c oxidase, the last enzyme in the mitochondrial electron transport chain which drives oxidative phosphorylation. The respiratory chain contains 3 multisubunit complexes succinate dehydrogenase (complex II, CII), ubiquinol-cytochrome c oxidoreductase (cytochrome b-c1 complex, complex III, CIII) and cytochrome c oxidase (complex IV, CIV), that cooperate to transfer electrons derived from NADH and succinate to molecular oxygen, creating an electrochemical gradient over the inner membrane that drives transmembrane transport and the ATP synthase. Cytochrome c oxidase is the component of the respiratory chain that catalyzes the reduction of oxygen to water. Electrons originating from reduced cytochrome c in the intermembrane space (IMS) are transferred via the dinuclear copper A center (CU(A)) of subunit 2 and heme A of subunit 1 to the active site in subunit 1, a binuclear center (BNC) formed by heme A3 and copper B (CU(B)). The BNC reduces molecular oxygen to 2 water molecules using 4 electrons from cytochrome c in the IMS and 4 protons from the mitochondrial matrix. This is Cytochrome c oxidase subunit 8A, mitochondrial (COX8A) from Hylobates agilis (Agile gibbon).